A 539-amino-acid chain; its full sequence is MHDKVLILDFGSQVTQLIARRVREAHVYCEIHPNDVSDAFVREFAPKAIILSGSHASTYEDHQLRAPQAVWDLGVPVLGICYGMQTMAVQLGGKVEWSDHREFGYAEVRAHGHTRLLKDIQDFATPEGHGMLKVWMSHGDKVTELPPGFKLLASTPSCPVAGMADEARGYYAVQFHPEVTHTVQGRALLERFVLEIAGAKPDWVMRDHIDEAVKAIREQVGDEEVILGLSGGVDSSVAAALIHRAIGDQLTCVFVDHGLLRLDEGKMVMDMFAGRLHAKVVHVDASEQFLGHLAGVTDPEAKRKIIGREFVEVFQAEAKKLSNAKWLAQGTIYPDVVESGGTKTKKATTIKSHHNVGGLPETLGLKLLEPLRDLFKDEVRELGVALGLPHEMVYRHPFPGPGLGVRILGEVKREYADLLRRADAIFIEELRGTKATAQDAAAGLCGEGDVGKSWYDLTSQAFAVFLPIKSVGVMGDGRTYDYVTALRAVQTTDFMTAHWAHLPYALLGRVSNRIINEVRGLSRVVYDVSGKPPATIEWE.

A Glutamine amidotransferase type-1 domain is found at 4 to 202; the sequence is KVLILDFGSQ…VLEIAGAKPD (199 aa). Cysteine 81 acts as the Nucleophile in catalysis. Active-site residues include histidine 176 and glutamate 178. Residues 203–395 form the GMPS ATP-PPase domain; it reads WVMRDHIDEA…LGLPHEMVYR (193 aa). 230 to 236 lines the ATP pocket; sequence SGGVDSS.

As to quaternary structure, homodimer.

The enzyme catalyses XMP + L-glutamine + ATP + H2O = GMP + L-glutamate + AMP + diphosphate + 2 H(+). It participates in purine metabolism; GMP biosynthesis; GMP from XMP (L-Gln route): step 1/1. In terms of biological role, catalyzes the synthesis of GMP from XMP. The chain is GMP synthase [glutamine-hydrolyzing] from Ralstonia pickettii (strain 12J).